The chain runs to 342 residues: Dihydroorotase (342 aa).

Residues His-13 and His-15 each coordinate Zn(2+). Residues 15 to 17 (HLR) and Asn-41 contribute to the substrate site. Zn(2+) is bound by residues Lys-98, His-135, and His-173. Lys-98 is modified (N6-carboxylysine). His-135 is a substrate binding site. Leu-218 lines the substrate pocket. Asp-246 is a Zn(2+) binding site. Residue Asp-246 is part of the active site. Substrate-binding residues include His-250 and Ala-262.

This sequence belongs to the metallo-dependent hydrolases superfamily. DHOase family. Class II DHOase subfamily. In terms of assembly, homodimer. Zn(2+) serves as cofactor.

It catalyses the reaction (S)-dihydroorotate + H2O = N-carbamoyl-L-aspartate + H(+). Its pathway is pyrimidine metabolism; UMP biosynthesis via de novo pathway; (S)-dihydroorotate from bicarbonate: step 3/3. In terms of biological role, catalyzes the reversible cyclization of carbamoyl aspartate to dihydroorotate. The polypeptide is Dihydroorotase (Vibrio parahaemolyticus serotype O3:K6 (strain RIMD 2210633)).